The primary structure comprises 213 residues: Ras-related protein Rab-25 (213 aa).

Residues Ser21, Gly24, Lys25, Thr26, Asn27, Ser38, His39, Thr43, and Thr44 each contribute to the GTP site. Thr26 is a Mg(2+) binding site. Short sequence motifs (switch) lie at residues 35–49 (NEFS…GVEF) and 67–84 (DTAG…YYRG). 2 residues coordinate Mg(2+): Thr44 and Asp67. 6 residues coordinate GTP: Gly70, Asn125, Lys126, Asp128, Ala156, and Leu157. 2 S-geranylgeranyl cysteine lipidation sites follow: Cys209 and Cys210. At Cys210 the chain carries Cysteine methyl ester. Positions 211 to 213 (INL) are cleaved as a propeptide — removed in mature form.

This sequence belongs to the small GTPase superfamily. Rab family. In terms of assembly, interacts (GTP-bound form) with RAB11FIP1, RAB11FIP2, RAB11FIP3 and RAB11FIP4. Interacts (via the hypervariable C-terminal region) with ITGB1 (via the cytoplasmic region); the interaction is GTP-dependent. Interacts with ITGAV. Associates with the integrin alpha-V/beta-1 heterodimer. Interacts with VPS33B. Mg(2+) is required as a cofactor. In terms of tissue distribution, expression is restricted to epithelial cells. Expressed in the gastrointestinal mucosa, (highest expression seen in the ileum and colon), kidney, and lung. A very minor and variable level of expression is seen in the splenic tissue.

The protein resides in the cell membrane. Its subcellular location is the cell projection. It localises to the pseudopodium membrane. The protein localises to the cytoplasmic vesicle. It catalyses the reaction GTP + H2O = GDP + phosphate + H(+). With respect to regulation, regulated by guanine nucleotide exchange factors (GEFs) which promote the exchange of bound GDP for free GTP. Regulated by GTPase activating proteins (GAPs) which increase the GTP hydrolysis activity. Inhibited by GDP dissociation inhibitors (GDIs) which prevent Rab-GDP dissociation. Functionally, the small GTPases Rab are key regulators of intracellular membrane trafficking, from the formation of transport vesicles to their fusion with membranes. Rabs cycle between an inactive GDP-bound form and an active GTP-bound form that is able to recruit to membranes different set of downstream effectors directly responsible for vesicle formation, movement, tethering and fusion. RAB25 regulates epithelial cell differentiation, proliferation and survival, thereby playing key roles in tumorigenesis. Promotes invasive migration of cells in which it functions to localize and maintain integrin alpha-V/beta-1 at the tips of extending pseudopodia. Involved in the regulation of epithelial morphogenesis through the control of CLDN4 expression and localization at tight junctions. May selectively regulate the apical recycling pathway. Together with MYO5B regulates transcytosis. The protein is Ras-related protein Rab-25 (RAB25) of Oryctolagus cuniculus (Rabbit).